A 197-amino-acid chain; its full sequence is Beta-crystallin A2 (197 aa).

Positions 1–11 are N-terminal arm; the sequence is MSSAPAPGPAP. Beta/gamma crystallin 'Greek key' domains follow at residues 12-52 and 53-99; these read ASLT…KVEN and GVWV…RPVL. The connecting peptide stretch occupies residues 100 to 105; the sequence is CANHND. 2 Beta/gamma crystallin 'Greek key' domains span residues 106–147 and 148–196; these read SRVT…KVSS and GAWV…RRVQ.

It belongs to the beta/gamma-crystallin family. Homo/heterodimer, or complexes of higher-order. The structure of beta-crystallin oligomers seems to be stabilized through interactions between the N-terminal arms.

Crystallins are the dominant structural components of the vertebrate eye lens. The protein is Beta-crystallin A2 (CRYBA2) of Homo sapiens (Human).